Here is a 325-residue protein sequence, read N- to C-terminus: Tetraacyldisaccharide 4'-kinase (325 aa).

Position 55-62 (55-62 (TAGGNGKT)) interacts with ATP.

It belongs to the LpxK family.

It catalyses the reaction a lipid A disaccharide + ATP = a lipid IVA + ADP + H(+). It functions in the pathway glycolipid biosynthesis; lipid IV(A) biosynthesis; lipid IV(A) from (3R)-3-hydroxytetradecanoyl-[acyl-carrier-protein] and UDP-N-acetyl-alpha-D-glucosamine: step 6/6. In terms of biological role, transfers the gamma-phosphate of ATP to the 4'-position of a tetraacyldisaccharide 1-phosphate intermediate (termed DS-1-P) to form tetraacyldisaccharide 1,4'-bis-phosphate (lipid IVA). This chain is Tetraacyldisaccharide 4'-kinase, found in Salmonella paratyphi C (strain RKS4594).